Reading from the N-terminus, the 199-residue chain is Potassium-transporting ATPase KdpC subunit (199 aa).

A helical membrane pass occupies residues 7-27; sequence PALVMTAALCLITGIIYPGLI.

It belongs to the KdpC family. In terms of assembly, the system is composed of three essential subunits: KdpA, KdpB and KdpC.

It localises to the cell inner membrane. Its function is as follows. Part of the high-affinity ATP-driven potassium transport (or Kdp) system, which catalyzes the hydrolysis of ATP coupled with the electrogenic transport of potassium into the cytoplasm. This subunit acts as a catalytic chaperone that increases the ATP-binding affinity of the ATP-hydrolyzing subunit KdpB by the formation of a transient KdpB/KdpC/ATP ternary complex. The sequence is that of Potassium-transporting ATPase KdpC subunit from Gemmatimonas aurantiaca (strain DSM 14586 / JCM 11422 / NBRC 100505 / T-27).